An 806-amino-acid chain; its full sequence is Leucine--tRNA ligase (806 aa).

The 'HIGH' region motif lies at 38–48 (PYPSGEIHMGH). The short motif at 572–576 (KMSKS) is the 'KMSKS' region element. Residue Lys575 participates in ATP binding.

This sequence belongs to the class-I aminoacyl-tRNA synthetase family.

The protein localises to the cytoplasm. The catalysed reaction is tRNA(Leu) + L-leucine + ATP = L-leucyl-tRNA(Leu) + AMP + diphosphate. In Helicobacter pylori (strain ATCC 700392 / 26695) (Campylobacter pylori), this protein is Leucine--tRNA ligase.